We begin with the raw amino-acid sequence, 387 residues long: Exodeoxyribonuclease 7 large subunit (387 aa).

It belongs to the XseA family. Heterooligomer composed of large and small subunits.

The protein resides in the cytoplasm. It catalyses the reaction Exonucleolytic cleavage in either 5'- to 3'- or 3'- to 5'-direction to yield nucleoside 5'-phosphates.. Its function is as follows. Bidirectionally degrades single-stranded DNA into large acid-insoluble oligonucleotides, which are then degraded further into small acid-soluble oligonucleotides. The sequence is that of Exodeoxyribonuclease 7 large subunit from Campylobacter jejuni (strain RM1221).